The primary structure comprises 262 residues: Cytochrome c oxidase subunit 3 (262 aa).

The next 7 membrane-spanning stretches (helical) occupy residues Pro16–Phe36, Thr42–Trp59, Gly83–Phe103, Phe128–Ala148, Ser163–Ile183, Phe198–Ile218, and Ala240–Trp260.

This sequence belongs to the cytochrome c oxidase subunit 3 family. As to quaternary structure, component of the cytochrome c oxidase (complex IV, CIV), a multisubunit enzyme composed of a catalytic core of 3 subunits and several supernumerary subunits. The complex exists as a monomer or a dimer and forms supercomplexes (SCs) in the inner mitochondrial membrane with ubiquinol-cytochrome c oxidoreductase (cytochrome b-c1 complex, complex III, CIII).

Its subcellular location is the mitochondrion inner membrane. It carries out the reaction 4 Fe(II)-[cytochrome c] + O2 + 8 H(+)(in) = 4 Fe(III)-[cytochrome c] + 2 H2O + 4 H(+)(out). In terms of biological role, component of the cytochrome c oxidase, the last enzyme in the mitochondrial electron transport chain which drives oxidative phosphorylation. The respiratory chain contains 3 multisubunit complexes succinate dehydrogenase (complex II, CII), ubiquinol-cytochrome c oxidoreductase (cytochrome b-c1 complex, complex III, CIII) and cytochrome c oxidase (complex IV, CIV), that cooperate to transfer electrons derived from NADH and succinate to molecular oxygen, creating an electrochemical gradient over the inner membrane that drives transmembrane transport and the ATP synthase. Cytochrome c oxidase is the component of the respiratory chain that catalyzes the reduction of oxygen to water. Electrons originating from reduced cytochrome c in the intermembrane space (IMS) are transferred via the dinuclear copper A center (CU(A)) of subunit 2 and heme A of subunit 1 to the active site in subunit 1, a binuclear center (BNC) formed by heme A3 and copper B (CU(B)). The BNC reduces molecular oxygen to 2 water molecules using 4 electrons from cytochrome c in the IMS and 4 protons from the mitochondrial matrix. This Aedes aegypti (Yellowfever mosquito) protein is Cytochrome c oxidase subunit 3.